The following is a 427-amino-acid chain: Probable threonylcarbamoyladenosine tRNA methylthiotransferase (427 aa).

Positions 12–118 constitute an MTTase N-terminal domain; that stretch reads MRVYVEGYGC…AGEILKNYVE (107 aa). Residues Cys-21, Cys-57, Cys-86, Cys-155, Cys-159, and Cys-162 each coordinate [4Fe-4S] cluster. The Radical SAM core domain maps to 141-370; it reads LKPSLITPLP…DKLRRELSYL (230 aa). Residues 373 to 427 form the TRAM domain; it reads KKYIGKAMKVLVLDEGKGYTDNFKVVKFEGGEVGEFRKVKITDAKTFGLKGELIL.

This sequence belongs to the methylthiotransferase family. CDKAL1 subfamily. [4Fe-4S] cluster serves as cofactor.

It catalyses the reaction N(6)-L-threonylcarbamoyladenosine(37) in tRNA + (sulfur carrier)-SH + AH2 + 2 S-adenosyl-L-methionine = 2-methylsulfanyl-N(6)-L-threonylcarbamoyladenosine(37) in tRNA + (sulfur carrier)-H + 5'-deoxyadenosine + L-methionine + A + S-adenosyl-L-homocysteine + 2 H(+). Catalyzes the methylthiolation of N6-threonylcarbamoyladenosine (t(6)A), leading to the formation of 2-methylthio-N6-threonylcarbamoyladenosine (ms(2)t(6)A) at position 37 in tRNAs that read codons beginning with adenine. This chain is Probable threonylcarbamoyladenosine tRNA methylthiotransferase, found in Methanocaldococcus jannaschii (strain ATCC 43067 / DSM 2661 / JAL-1 / JCM 10045 / NBRC 100440) (Methanococcus jannaschii).